A 411-amino-acid chain; its full sequence is MSTLERIDPEIADVICEEEKRQRGKLELIASENFVSEAVREAQGSVLTNKYAEGYPGKRYYGGCEFVDMAERLAQERAKKLFDAEYANVQPHSGSQANMAIFFAVLQPGDTVLGMDLRQGGHLTHGSPVSFSGKLYNVVSYGVRKDTEQIDFDQVARLAREHRPKLIIAGASAYPRIIDFARFGQIAKEIAAYLMVDMAHIAGLVCSGLHPSPVPHADFVTSTTHKTLRGPRGGLILSHSNYTRLLDSQIFPGIQGGPLMHVIAAKAVAFREALQPSFKEYQQRVVADAAALAQELKALGYRLVSGGTDNHLMLVDLTPQGVTGRVAEETLDKAGITVNKNSIPFDQQKPQVTSGIRIGTPALATRGILPHHMKAVAGFMHRGLKSAGDEPALARLRAEVAEFCSAFPLFS.

Residues Leu-117 and Gly-121–Leu-123 contribute to the (6S)-5,6,7,8-tetrahydrofolate site. Lys-226 is subject to N6-(pyridoxal phosphate)lysine.

This sequence belongs to the SHMT family. Homodimer. Pyridoxal 5'-phosphate serves as cofactor.

The protein resides in the cytoplasm. It catalyses the reaction (6R)-5,10-methylene-5,6,7,8-tetrahydrofolate + glycine + H2O = (6S)-5,6,7,8-tetrahydrofolate + L-serine. The protein operates within one-carbon metabolism; tetrahydrofolate interconversion. It functions in the pathway amino-acid biosynthesis; glycine biosynthesis; glycine from L-serine: step 1/1. Functionally, catalyzes the reversible interconversion of serine and glycine with tetrahydrofolate (THF) serving as the one-carbon carrier. This reaction serves as the major source of one-carbon groups required for the biosynthesis of purines, thymidylate, methionine, and other important biomolecules. Also exhibits THF-independent aldolase activity toward beta-hydroxyamino acids, producing glycine and aldehydes, via a retro-aldol mechanism. The protein is Serine hydroxymethyltransferase of Syntrophobacter fumaroxidans (strain DSM 10017 / MPOB).